Consider the following 224-residue polypeptide: tRNA (guanine-N(7)-)-methyltransferase (224 aa).

The S-adenosyl-L-methionine site is built by Glu56, Glu81, Asp108, and Asp131. Asp131 is an active-site residue. Residues Lys135, Asp167, and 202 to 205 (TKFE) each bind substrate.

It belongs to the class I-like SAM-binding methyltransferase superfamily. TrmB family.

The catalysed reaction is guanosine(46) in tRNA + S-adenosyl-L-methionine = N(7)-methylguanosine(46) in tRNA + S-adenosyl-L-homocysteine. Its pathway is tRNA modification; N(7)-methylguanine-tRNA biosynthesis. Its function is as follows. Catalyzes the formation of N(7)-methylguanine at position 46 (m7G46) in tRNA. This Nitrosomonas europaea (strain ATCC 19718 / CIP 103999 / KCTC 2705 / NBRC 14298) protein is tRNA (guanine-N(7)-)-methyltransferase.